Consider the following 255-residue polypeptide: Glioma pathogenesis-related protein 1 (255 aa).

An N-terminal signal peptide occupies residues M1–S17. Residues Q39 to Y164 form the SCP domain. The helical transmembrane segment at S224–V244 threads the bilayer.

This sequence belongs to the CRISP family.

It localises to the membrane. The chain is Glioma pathogenesis-related protein 1 (Glipr1) from Mus musculus (Mouse).